Here is a 410-residue protein sequence, read N- to C-terminus: Lipoyl synthase, mitochondrial (410 aa).

A mitochondrion-targeting transit peptide spans 1-29 (MASTTVCSAARIRVASSQVLRSIANTRTY). The segment covering 29–39 (YATTSPESSIP) has biased composition (polar residues). The tract at residues 29 to 49 (YATTSPESSIPETKPTAKRTP) is disordered. Positions 129, 134, 140, 160, 164, 167, and 375 each coordinate [4Fe-4S] cluster. In terms of domain architecture, Radical SAM core spans 143-364 (GGSKAAATAT…KEKAMEMGFL (222 aa)).

This sequence belongs to the radical SAM superfamily. Lipoyl synthase family. [4Fe-4S] cluster serves as cofactor.

It localises to the mitochondrion. The catalysed reaction is [[Fe-S] cluster scaffold protein carrying a second [4Fe-4S](2+) cluster] + N(6)-octanoyl-L-lysyl-[protein] + 2 oxidized [2Fe-2S]-[ferredoxin] + 2 S-adenosyl-L-methionine + 4 H(+) = [[Fe-S] cluster scaffold protein] + N(6)-[(R)-dihydrolipoyl]-L-lysyl-[protein] + 4 Fe(3+) + 2 hydrogen sulfide + 2 5'-deoxyadenosine + 2 L-methionine + 2 reduced [2Fe-2S]-[ferredoxin]. The protein operates within protein modification; protein lipoylation via endogenous pathway; protein N(6)-(lipoyl)lysine from octanoyl-[acyl-carrier-protein]: step 2/2. Catalyzes the radical-mediated insertion of two sulfur atoms into the C-6 and C-8 positions of the octanoyl moiety bound to the lipoyl domains of lipoate-dependent enzymes, thereby converting the octanoylated domains into lipoylated derivatives. The sequence is that of Lipoyl synthase, mitochondrial from Arthroderma otae (strain ATCC MYA-4605 / CBS 113480) (Microsporum canis).